The primary structure comprises 376 residues: uncharacterized protein (376 aa).

Position 59 is a phosphoserine (S59). One can recognise a Rho-GAP domain in the interval 139–367 (VAIEITVQRQ…CLIEHHNAIF (229 aa)). Residues 307 to 338 (RPSRSPKKSNDFETATPWDLLSDEGEGPDASS) are disordered.

This is an uncharacterized protein from Arabidopsis thaliana (Mouse-ear cress).